Consider the following 151-residue polypeptide: Protein PLANT CADMIUM RESISTANCE 1 (151 aa).

2 helical membrane passes run 31–47 (ITLC…AEIV) and 54–71 (CCAA…TSCG).

It belongs to the cornifelin family. Homopentamer. In terms of tissue distribution, expressed in aerial part, but not in roots. Detected in the guard and mesophyll cells.

The protein localises to the cell membrane. Involved in glutathione-independent cadmium resistance. Reduces cadmium uptake rather than activating efflux, but is not closely coupled to calcium transporter. The chain is Protein PLANT CADMIUM RESISTANCE 1 (PCR1) from Arabidopsis thaliana (Mouse-ear cress).